A 436-amino-acid chain; its full sequence is Eukaryotic translation initiation factor 5 (436 aa).

Residue 27-34 coordinates GTP; it reads GKGNGIKT. Residues 177 to 203 form a disordered region; sequence NSDKGSSNDDDDDDWEPEPVEPNGMLS. Residues 184–195 show a composition bias toward acidic residues; the sequence is NDDDDDDWEPEP. One can recognise a W2 domain in the interval 216–379; sequence EKSEEQRLDM…KEAEEETEEE (164 aa). Residues 396-408 are compositionally biased toward basic and acidic residues; the sequence is LRQQKEKAAREAQ. A disordered region spans residues 396-436; the sequence is LRQQKEKAAREAQQKSAKATNGNAAAASGANDEEDLDIDDI. Over residues 409–425 the composition is skewed to low complexity; the sequence is QKSAKATNGNAAAASGA. Residues 426 to 436 show a composition bias toward acidic residues; that stretch reads NDEEDLDIDDI.

It belongs to the eIF-2-beta/eIF-5 family.

Catalyzes the hydrolysis of GTP bound to the 40S ribosomal initiation complex (40S.mRNA.Met-tRNA[F].eIF-2.GTP) with the subsequent joining of a 60S ribosomal subunit resulting in the release of eIF-2 and the guanine nucleotide. The subsequent joining of a 60S ribosomal subunit results in the formation of a functional 80S initiation complex (80S.mRNA.Met-tRNA[F]). The sequence is that of Eukaryotic translation initiation factor 5 from Caenorhabditis elegans.